The following is a 340-amino-acid chain: 4-dimethylallyltryptophan N-methyltransferase easF (340 aa).

Belongs to the methyltransferase superfamily. As to quaternary structure, homodimer.

It catalyses the reaction 4-(3-methylbut-2-enyl)-L-tryptophan + S-adenosyl-L-methionine = 4-(3-methylbut-2-enyl)-L-abrine + S-adenosyl-L-homocysteine + H(+). Its pathway is alkaloid biosynthesis; ergot alkaloid biosynthesis. Its function is as follows. 4-dimethylallyltryptophan N-methyltransferase; part of the gene cluster that mediates the biosynthesis of fungal ergot alkaloid. DmaW catalyzes the first step of ergot alkaloid biosynthesis by condensing dimethylallyl diphosphate (DMAP) and tryptophan to form 4-dimethylallyl-L-tryptophan. The second step is catalyzed by the methyltransferase easF that methylates 4-dimethylallyl-L-tryptophan in the presence of S-adenosyl-L-methionine, resulting in the formation of 4-dimethylallyl-L-abrine. The catalase easC and the FAD-dependent oxidoreductase easE then transform 4-dimethylallyl-L-abrine to chanoclavine-I which is further oxidized by easD in the presence of NAD(+), resulting in the formation of chanoclavine-I aldehyde. Chanoclavine-I aldehyde is the precursor of ergoamides and ergopeptines in Clavicipitaceae, and clavine-type alcaloids such as fumiclavine in Trichocomaceae. However, the metabolites downstream of chanoclavine-I aldehyde in Arthrodermataceae have not been identified yet. This is 4-dimethylallyltryptophan N-methyltransferase easF from Trichophyton verrucosum (strain HKI 0517).